Consider the following 585-residue polypeptide: Beta-(1--&gt;2)glucan export ATP-binding/permease protein NdvA (585 aa).

Residues 21 to 301 (VGAIVIANIV…MKAFATQIFE (281 aa)) form the ABC transmembrane type-1 domain. A run of 6 helical transmembrane segments spans residues 22–42 (GAIV…PILF), 55–75 (VAPM…AFVL), 136–156 (QHLA…AMDV), 158–178 (LSLI…VVMS), 245–265 (LNRI…TVLV), and 269–289 (ELGV…IGRL). Positions 335–569 (VEFRDISFDF…NGRFAALLRA (235 aa)) constitute an ABC transporter domain. Residue 368 to 375 (GPTGAGKT) participates in ATP binding.

Belongs to the ABC transporter superfamily. Beta-(1--&gt;2)glucan exporter (TC 3.A.1.108.1) family. As to quaternary structure, homodimer.

It localises to the cell inner membrane. The catalysed reaction is [(1-&gt;2)-beta-D-glucosyl](n)(in) + ATP + H2O = [(1-&gt;2)-beta-D-glucosyl](n)(out) + ADP + phosphate + H(+). Involved in beta-(1--&gt;2)glucan export which is required for nodulation of legume roots. May be involved in other classes of oligosaccharides export. Transmembrane domains (TMD) form a pore in the inner membrane and the ATP-binding domain (NBD) is responsible for energy generation. In Rhizobium meliloti (strain 1021) (Ensifer meliloti), this protein is Beta-(1--&gt;2)glucan export ATP-binding/permease protein NdvA.